The primary structure comprises 299 residues: GTPase Era (299 aa).

An Era-type G domain is found at 5-172 (KSGFVSIIGR…IDVLKSFLPE (168 aa)). Residues 13-20 (GRPNVGKS) form a G1 region. 13-20 (GRPNVGKS) is a GTP binding site. The G2 stretch occupies residues 39 to 43 (QTTRN). A G3 region spans residues 60-63 (DTPG). GTP-binding positions include 60 to 64 (DTPGI) and 122 to 125 (NKID). Residues 122–125 (NKID) are G4. The interval 151–153 (ISA) is G5. The KH type-2 domain maps to 203–280 (TSEEIPHAIG…YLELWVKVQR (78 aa)).

It belongs to the TRAFAC class TrmE-Era-EngA-EngB-Septin-like GTPase superfamily. Era GTPase family. Monomer.

It is found in the cytoplasm. The protein resides in the cell membrane. Its function is as follows. An essential GTPase that binds both GDP and GTP, with rapid nucleotide exchange. Plays a role in 16S rRNA processing and 30S ribosomal subunit biogenesis and possibly also in cell cycle regulation and energy metabolism. This is GTPase Era from Staphylococcus epidermidis (strain ATCC 12228 / FDA PCI 1200).